The primary structure comprises 272 residues: NH(3)-dependent NAD(+) synthetase (272 aa).

45–52 (GISGGQDS) lines the ATP pocket. Mg(2+) is bound at residue D51. R138 is a binding site for deamido-NAD(+). T158 provides a ligand contact to ATP. E163 provides a ligand contact to Mg(2+). Positions 171 and 178 each coordinate deamido-NAD(+). Residues K187 and T209 each coordinate ATP. A deamido-NAD(+)-binding site is contributed by 258 to 259 (HK).

The protein belongs to the NAD synthetase family. Homodimer.

The enzyme catalyses deamido-NAD(+) + NH4(+) + ATP = AMP + diphosphate + NAD(+) + H(+). The protein operates within cofactor biosynthesis; NAD(+) biosynthesis; NAD(+) from deamido-NAD(+) (ammonia route): step 1/1. Catalyzes the ATP-dependent amidation of deamido-NAD to form NAD. Uses ammonia as a nitrogen source. This is NH(3)-dependent NAD(+) synthetase from Bacillus cereus (strain AH187).